The following is a 238-amino-acid chain: Insulin-like growth factor-binding protein 6 (238 aa).

Residues 1 to 25 form the signal peptide; it reads MTWDGLPTQPLLMLLMLLFAAGSGS. One can recognise an IGFBP N-terminal domain in the interval 26–108; it reads ALAGCPGCGA…LIGQGRCQRA (83 aa). 5 disulfide bridges follow: cysteine 30-cysteine 33, cysteine 41-cysteine 45, cysteine 58-cysteine 64, cysteine 72-cysteine 85, and cysteine 79-cysteine 105. The tract at residues 104-159 is disordered; the sequence is RCQRARGPSEETTKESKPQGGASRSRDTNHRDRQKNPRTSAAPIRPNPVQDSEMGP. Basic and acidic residues-rich tracts occupy residues 110 to 120 and 127 to 138; these read GPSEETTKESK and RSRDTNHRDRQK. Positions 157–232 constitute a Thyroglobulin type-1 domain; sequence MGPCRRHLDS…SPDGQGSTQC (76 aa). 3 cysteine pairs are disulfide-bonded: cysteine 160/cysteine 188, cysteine 199/cysteine 210, and cysteine 212/cysteine 232. Positions 218 to 238 are disordered; sequence QPLPVSPDGQGSTQCSARSSG. Over residues 226 to 238 the composition is skewed to polar residues; it reads GQGSTQCSARSSG.

As to quaternary structure, interacts (via C-terminal domain) with PHB2. O-glycosylated.

It localises to the secreted. Its function is as follows. IGF-binding proteins prolong the half-life of the IGFs and have been shown to either inhibit or stimulate the growth promoting effects of the IGFs on cell culture. They alter the interaction of IGFs with their cell surface receptors. Activates the MAPK signaling pathway and induces cell migration. The chain is Insulin-like growth factor-binding protein 6 (Igfbp6) from Mus musculus (Mouse).